A 216-amino-acid polypeptide reads, in one-letter code: FMN-dependent NADH:quinone oxidoreductase (216 aa).

FMN contacts are provided by residues S10 and 15 to 17 (SIS).

The protein belongs to the azoreductase type 1 family. As to quaternary structure, homodimer. It depends on FMN as a cofactor.

It catalyses the reaction 2 a quinone + NADH + H(+) = 2 a 1,4-benzosemiquinone + NAD(+). The catalysed reaction is N,N-dimethyl-1,4-phenylenediamine + anthranilate + 2 NAD(+) = 2-(4-dimethylaminophenyl)diazenylbenzoate + 2 NADH + 2 H(+). Quinone reductase that provides resistance to thiol-specific stress caused by electrophilic quinones. Functionally, also exhibits azoreductase activity. Catalyzes the reductive cleavage of the azo bond in aromatic azo compounds to the corresponding amines. This is FMN-dependent NADH:quinone oxidoreductase from Nocardia farcinica (strain IFM 10152).